Here is a 64-residue protein sequence, read N- to C-terminus: Large ribosomal subunit protein bL35 (64 aa).

Belongs to the bacterial ribosomal protein bL35 family.

This chain is Large ribosomal subunit protein bL35, found in Vibrio vulnificus (strain CMCP6).